Consider the following 976-residue polypeptide: Vacuolar membrane protease (976 aa).

Over 1-15 the chain is Cytoplasmic; that stretch reads MKLKSVFRSVLKYRK. A helical membrane pass occupies residues 16–36; that stretch reads TNLSLLLLITYSIITLLYIFD. The Vacuolar segment spans residues 37-359; the sequence is HERYKLNLPK…KFFVISAKTL (323 aa). N96 and N121 each carry an N-linked (GlcNAc...) asparagine glycan. The Zn(2+) site is built by H156 and D168. N189 is a glycosylation site (N-linked (GlcNAc...) asparagine). E200 (proton acceptor) is an active-site residue. E201 is a Zn(2+) binding site. 2 N-linked (GlcNAc...) asparagine glycosylation sites follow: N212 and N217. Residues E226 and H300 each contribute to the Zn(2+) site. A helical transmembrane segment spans residues 360–380; it reads FYWNCIFLLVSPVVAIGLYLI. At 381–392 the chain is on the cytoplasmic side; the sequence is SRDRMTWKSHSW. A helical membrane pass occupies residues 393 to 412; sequence LSWTRFPLSLAAGIIVQKLF. At 413-428 the chain is on the vacuolar side; the sequence is SNDIIRSNPLTFSRNY. The helical transmembrane segment at 429–449 threads the bilayer; sequence FWPISAFFTQVIFTSYVLINC. Topologically, residues 450-461 are cytoplasmic; that stretch reads SNFFFPCADMKS. A helical membrane pass occupies residues 462–482; that stretch reads LSIIELFIILWTILLFTSKLL. Topologically, residues 483–496 are vacuolar; sequence YSSDYRYTGLYPLS. Residues 497 to 517 form a helical membrane-spanning segment; it reads IFFLLSTIAAILRLLALALGM. The Cytoplasmic segment spans residues 518–627; sequence RTRKRLGREC…NSLKLEYTDY (110 aa). A disordered region spans residues 528–610; sequence RDHHSNYSSH…PLLKGSNSME (83 aa). Over residues 549 to 558 the composition is skewed to polar residues; sequence NLEQPQDQFT. Positions 559-570 are enriched in low complexity; it reads SSQDDQASIQDD. The segment covering 582 to 601 has biased composition (basic and acidic residues); it reads NVDEDHGMDSSSQQHDERVP. Residues 628-648 form a helical membrane-spanning segment; the sequence is AWIIQFLLIVPIPSFILFNSV. At 649–668 the chain is on the vacuolar side; the sequence is DVIMDALNHTVQEGSKATFD. N656 is a glycosylation site (N-linked (GlcNAc...) asparagine). A helical membrane pass occupies residues 669–689; sequence VLRFGMVGSILMALPILPFFY. At 690-692 the chain is on the cytoplasmic side; it reads KVN. Residues 693–713 traverse the membrane as a helical segment; the sequence is YITISLTALLFLISASKTLLV. Residues 714–976 are Vacuolar-facing; it reads HPFTNSNPLK…LVIVKDAIIL (263 aa). 5 N-linked (GlcNAc...) asparagine glycosylation sites follow: N768, N796, N811, N866, and N937.

Belongs to the peptidase M28 family. Zn(2+) serves as cofactor.

It localises to the vacuole membrane. Functionally, may be involved in vacuolar sorting and osmoregulation. The sequence is that of Vacuolar membrane protease from Saccharomyces cerevisiae (strain RM11-1a) (Baker's yeast).